We begin with the raw amino-acid sequence, 85 residues long: Cytochrome c6 (85 aa).

Residues Cys-14, Cys-17, His-18, and Met-58 each coordinate heme c.

It belongs to the cytochrome c family. PetJ subfamily. Monomer. In terms of processing, binds 1 heme c group covalently per subunit.

It localises to the plastid. Its subcellular location is the chloroplast thylakoid lumen. In terms of biological role, functions as an electron carrier between membrane-bound cytochrome b6-f and photosystem I in oxygenic photosynthesis. In Pyropia tenera (Nori), this protein is Cytochrome c6 (petJ).